We begin with the raw amino-acid sequence, 367 residues long: S-adenosylmethionine:tRNA ribosyltransferase-isomerase (367 aa).

Residues 150–182 (RHGEEEESSDEAISSQNPEIATESKRTPSNDDK) form a disordered region. The segment covering 171–182 (TESKRTPSNDDK) has biased composition (basic and acidic residues).

It belongs to the QueA family. Monomer.

It is found in the cytoplasm. It catalyses the reaction 7-aminomethyl-7-carbaguanosine(34) in tRNA + S-adenosyl-L-methionine = epoxyqueuosine(34) in tRNA + adenine + L-methionine + 2 H(+). It participates in tRNA modification; tRNA-queuosine biosynthesis. Functionally, transfers and isomerizes the ribose moiety from AdoMet to the 7-aminomethyl group of 7-deazaguanine (preQ1-tRNA) to give epoxyqueuosine (oQ-tRNA). The polypeptide is S-adenosylmethionine:tRNA ribosyltransferase-isomerase (Rickettsia felis (strain ATCC VR-1525 / URRWXCal2) (Rickettsia azadi)).